We begin with the raw amino-acid sequence, 94 residues long: Large ribosomal subunit protein uL23 (94 aa).

Belongs to the universal ribosomal protein uL23 family. As to quaternary structure, part of the 50S ribosomal subunit. Contacts protein L29, and trigger factor when it is bound to the ribosome.

One of the early assembly proteins it binds 23S rRNA. One of the proteins that surrounds the polypeptide exit tunnel on the outside of the ribosome. Forms the main docking site for trigger factor binding to the ribosome. This chain is Large ribosomal subunit protein uL23, found in Listeria monocytogenes serotype 4b (strain CLIP80459).